The sequence spans 510 residues: Cytochrome P450 monooxygenase AFLA_114810 (510 aa).

Positions 1–17 (MLILLGLLCLYTGLYVA) are cleaved as a signal peptide. Cys-444 contacts heme.

Belongs to the cytochrome P450 family. The cofactor is heme.

It functions in the pathway secondary metabolite biosynthesis. Functionally, cytochrome P450 monooxygenase; part of the gene cluster 41 that mediates the biosynthesis of an extracellular and diffusible metabolite that is able to stimulate colony sclerotial production. In Aspergillus flavus (strain ATCC 200026 / FGSC A1120 / IAM 13836 / NRRL 3357 / JCM 12722 / SRRC 167), this protein is Cytochrome P450 monooxygenase AFLA_114810.